The chain runs to 208 residues: Large ribosomal subunit protein uL4 (208 aa).

A disordered region spans residues 49–78 (HKAKTRAEVRGGGKKPFRQKGTGNARQGST). Positions 69 to 78 (GTGNARQGST) are enriched in polar residues.

This sequence belongs to the universal ribosomal protein uL4 family. As to quaternary structure, part of the 50S ribosomal subunit.

In terms of biological role, one of the primary rRNA binding proteins, this protein initially binds near the 5'-end of the 23S rRNA. It is important during the early stages of 50S assembly. It makes multiple contacts with different domains of the 23S rRNA in the assembled 50S subunit and ribosome. Its function is as follows. Forms part of the polypeptide exit tunnel. The chain is Large ribosomal subunit protein uL4 from Chlorobaculum tepidum (strain ATCC 49652 / DSM 12025 / NBRC 103806 / TLS) (Chlorobium tepidum).